The following is a 289-amino-acid chain: uncharacterized protein (289 aa).

Residues 1-20 (MNPMDRQTEGQEPQHQDRQP) are compositionally biased toward basic and acidic residues. Residues 1–39 (MNPMDRQTEGQEPQHQDRQPGIESKMNPLPLSEDEDYRG) are disordered. NADP(+) is bound at residue 49–73 (IITGGDSGIGRAAAIAFAKEGADIS). Residue serine 181 participates in substrate binding. Catalysis depends on tyrosine 194, which acts as the Proton acceptor.

This sequence belongs to the short-chain dehydrogenases/reductases (SDR) family.

This is an uncharacterized protein from Bacillus subtilis (strain 168).